Consider the following 393-residue polypeptide: DNA polymerase processivity factor (393 aa).

Disordered regions lie at residues 25-50 (EMERGSRDHHRDHRDHREHRETREPP), 311-339 (ESRFERMGKQDDGKGDRSHKNDDGSALAS), and 355-393 (KNGTAGSSLFNEKEDSESDDSMHFDYSSNPNPKRQRCVV). Positions 31–41 (RDHHRDHRDHR) are enriched in basic residues. Residues 311–333 (ESRFERMGKQDDGKGDRSHKNDD) are compositionally biased toward basic and acidic residues.

It belongs to the herpesviridae polymerase accessory protein family.

Accessory subunit of the DNA polymerase that acts to increase the processivity of polymerization. The protein is DNA polymerase processivity factor (U27) of Human herpesvirus 6A (strain Uganda-1102) (HHV-6 variant A).